Here is a 65-residue protein sequence, read N- to C-terminus: uncharacterized protein (65 aa).

Residues 1–22 (MKFIKLFTFLVYLFVTLTNVFA) form the signal peptide.

This is an uncharacterized protein from Invertebrate iridescent virus 6 (IIV-6).